A 267-amino-acid polypeptide reads, in one-letter code: 5'-nucleotidase SurE (267 aa).

4 residues coordinate a divalent metal cation: aspartate 9, aspartate 10, serine 40, and asparagine 97.

This sequence belongs to the SurE nucleotidase family. A divalent metal cation serves as cofactor.

The protein localises to the cytoplasm. It carries out the reaction a ribonucleoside 5'-phosphate + H2O = a ribonucleoside + phosphate. In terms of biological role, nucleotidase that shows phosphatase activity on nucleoside 5'-monophosphates. The polypeptide is 5'-nucleotidase SurE (Helicobacter pylori (strain P12)).